The chain runs to 294 residues: IVFRAAQKRSDIEIVAINDLLDAEYMAYMLKYDSTHGRFDGTVEVKDGHLVVNGKKIRVTAERDPANLKWDEVGVDVVAEATGIFLTDETARKHITAGAKKVVLTGPSKDNTPMFVRGANFDTYAGQDIVSNASCTTNCLAPLAKVINDNFGIVEGLMTTVHATTATQKTVDGPSHKDWRGGRGAAQNIIPSSTGAAKAVGKVLPELNGKLTGMAFRVPTPNVSVVDLTVRLEKAASYEEIKKAIKAASEGAMKGVLGYTEDDVVSTDFNGEVCTSVFDAKAGIALNDNFVKLV.

Residues Asp19, Arg63, and Thr105 each contribute to the NAD(+) site. D-glyceraldehyde 3-phosphate contacts are provided by residues 134–136 (SCT) and Thr165. Cys135 serves as the catalytic Nucleophile. Position 177 is an N6-acetyllysine (Lys177). D-glyceraldehyde 3-phosphate is bound by residues 194–195 (TG) and Arg217. An N6-acetyllysine modification is found at Lys234.

It belongs to the glyceraldehyde-3-phosphate dehydrogenase family. Homotetramer.

The protein localises to the cytoplasm. The catalysed reaction is D-glyceraldehyde 3-phosphate + phosphate + NAD(+) = (2R)-3-phospho-glyceroyl phosphate + NADH + H(+). Its pathway is carbohydrate degradation; glycolysis; pyruvate from D-glyceraldehyde 3-phosphate: step 1/5. Its function is as follows. Catalyzes the oxidative phosphorylation of glyceraldehyde 3-phosphate (G3P) to 1,3-bisphosphoglycerate (BPG) using the cofactor NAD. The first reaction step involves the formation of a hemiacetal intermediate between G3P and a cysteine residue, and this hemiacetal intermediate is then oxidized to a thioester, with concomitant reduction of NAD to NADH. The reduced NADH is then exchanged with the second NAD, and the thioester is attacked by a nucleophilic inorganic phosphate to produce BPG. In Pseudescherichia vulneris (Escherichia vulneris), this protein is Glyceraldehyde-3-phosphate dehydrogenase (gap).